A 66-amino-acid chain; its full sequence is Rho-elapitoxin-Da1b (66 aa).

Cystine bridges form between C3–C24, C17–C42, C46–C58, and C59–C64.

It belongs to the three-finger toxin family. Short-chain subfamily. Aminergic toxin sub-subfamily. Expressed by the venom gland.

The protein localises to the secreted. Non-competitive antagonist of alpha-2 adrenergic receptors (ADRA2) in smooth muscles, and partial antagonist of D3 dopamine receptors (DRD3) (inhibits 25% of methylspiperone binding to this receptor). Also shows a low antagonism on D2 dopamine receptors (DRD2) (short isoform). Shows high affinity to adrenergic receptors (Ki=14 nM (ADRA2A), Ki=73 nM (ADRA2B), and Ki=38 nM (ADRA2C)). Increases heart rate and blood catecholamine concentrations. In Dendroaspis angusticeps (Eastern green mamba), this protein is Rho-elapitoxin-Da1b.